Consider the following 305-residue polypeptide: tRNA dimethylallyltransferase 1 (305 aa).

An ATP-binding site is contributed by 10-17 (GPTASGKS). Residue 12–17 (TASGKS) coordinates substrate. Residues 35-38 (DSLT) form an interaction with substrate tRNA region.

Belongs to the IPP transferase family. In terms of assembly, monomer. It depends on Mg(2+) as a cofactor.

It carries out the reaction adenosine(37) in tRNA + dimethylallyl diphosphate = N(6)-dimethylallyladenosine(37) in tRNA + diphosphate. Catalyzes the transfer of a dimethylallyl group onto the adenine at position 37 in tRNAs that read codons beginning with uridine, leading to the formation of N6-(dimethylallyl)adenosine (i(6)A). The chain is tRNA dimethylallyltransferase 1 from Trichlorobacter lovleyi (strain ATCC BAA-1151 / DSM 17278 / SZ) (Geobacter lovleyi).